The sequence spans 446 residues: Glutamate-1-semialdehyde 2,1-aminomutase (446 aa).

N6-(pyridoxal phosphate)lysine is present on Lys-278.

This sequence belongs to the class-III pyridoxal-phosphate-dependent aminotransferase family. HemL subfamily. As to quaternary structure, homodimer. Pyridoxal 5'-phosphate is required as a cofactor.

Its subcellular location is the cytoplasm. It carries out the reaction (S)-4-amino-5-oxopentanoate = 5-aminolevulinate. It participates in porphyrin-containing compound metabolism; protoporphyrin-IX biosynthesis; 5-aminolevulinate from L-glutamyl-tRNA(Glu): step 2/2. The sequence is that of Glutamate-1-semialdehyde 2,1-aminomutase from Deinococcus geothermalis (strain DSM 11300 / CIP 105573 / AG-3a).